The chain runs to 187 residues: UPF0200 protein MA_4660 (187 aa).

9 to 16 (GMPASGKS) is a binding site for ATP.

Belongs to the UPF0200 family.

In Methanosarcina acetivorans (strain ATCC 35395 / DSM 2834 / JCM 12185 / C2A), this protein is UPF0200 protein MA_4660.